A 275-amino-acid polypeptide reads, in one-letter code: Methylglyoxal reductase DkgA (275 aa).

The active-site Proton donor is the Y51. Residue H107 coordinates substrate. 187 to 241 (SPLAQGGEGVFDQKVIRELADKYGKTPAQIVIRWHLDCGLVVIPKSVTPSRIAEN) serves as a coordination point for NADP(+).

The protein belongs to the aldo/keto reductase family. Monomer.

It localises to the cytoplasm. It catalyses the reaction hydroxyacetone + NADP(+) = methylglyoxal + NADPH + H(+). Its function is as follows. Aldo-keto reductase that significantly contributes to cellular methylglyoxal detoxification by catalyzing the NADPH-dependent conversion of methylglyoxal to acetol. This Salmonella typhimurium (strain LT2 / SGSC1412 / ATCC 700720) protein is Methylglyoxal reductase DkgA.